An 84-amino-acid polypeptide reads, in one-letter code: Beta-toxin Tf1a (84 aa).

Positions 1–20 (MKGMILFISCLLLIGIVVEC) are cleaved as a signal peptide. One can recognise an LCN-type CS-alpha/beta domain in the interval 21-82 (KEGYLMDHEG…VWERATNRCG (62 aa)). 4 cysteine pairs are disulfide-bonded: Cys-31–Cys-81, Cys-35–Cys-57, Cys-43–Cys-62, and Cys-47–Cys-64. Cys-81 carries the cysteine amide modification.

The protein belongs to the long (4 C-C) scorpion toxin superfamily. Sodium channel inhibitor family. Beta subfamily. In terms of tissue distribution, expressed by the venom gland.

The protein resides in the secreted. Beta toxins bind voltage-independently at site-4 of sodium channels (Nav) and shift the voltage of activation toward more negative potentials thereby affecting sodium channel activation and promoting spontaneous and repetitive firing. The toxin induces a leftward shift, on all channels tested (including Blattella germanica and Varroa destructor Nav1), displacing a change in voltage dependence activation to more hyperpolarized potentials. In addition, the toxin mostly inhibits peak current of hNav1.4/SCN4A (53% inhibition of peak current at 100 nM) and hNav1.5/SCN5A (71% inhibition). The chain is Beta-toxin Tf1a from Tityus fasciolatus (Central Brazilian scorpion).